We begin with the raw amino-acid sequence, 20 residues long: Antimicrobial peptide AJN-10 (20 aa).

It localises to the secreted. Functionally, displays antimicrobial activity against the Gram-negative bacterium A.hydrophila. This chain is Antimicrobial peptide AJN-10, found in Anguilla japonica (Japanese eel).